A 429-amino-acid chain; its full sequence is Enolase (429 aa).

Gln162 contributes to the (2R)-2-phosphoglycerate binding site. Glu204 serves as the catalytic Proton donor. Asp241, Glu288, and Asp315 together coordinate Mg(2+). The (2R)-2-phosphoglycerate site is built by Lys340, Arg369, Ser370, and Lys391. Lys340 serves as the catalytic Proton acceptor.

It belongs to the enolase family. It depends on Mg(2+) as a cofactor.

Its subcellular location is the cytoplasm. It is found in the secreted. The protein localises to the cell surface. The catalysed reaction is (2R)-2-phosphoglycerate = phosphoenolpyruvate + H2O. Its pathway is carbohydrate degradation; glycolysis; pyruvate from D-glyceraldehyde 3-phosphate: step 4/5. Its function is as follows. Catalyzes the reversible conversion of 2-phosphoglycerate (2-PG) into phosphoenolpyruvate (PEP). It is essential for the degradation of carbohydrates via glycolysis. The protein is Enolase of Christiangramia forsetii (strain DSM 17595 / CGMCC 1.15422 / KT0803) (Gramella forsetii).